The chain runs to 317 residues: Probable RuBisCO transcriptional regulator (317 aa).

The region spanning 6 to 63 (FTLDQLRILRAILIQGSFKKAATSLYISQPAVSSHVHNIEKQLNIQLFDRSHRNAQLT) is the HTH lysR-type domain. The H-T-H motif DNA-binding region spans 23–42 (FKKAATSLYISQPAVSSHVH).

Belongs to the LysR transcriptional regulatory family.

The protein resides in the plastid. It localises to the chloroplast. Its function is as follows. Trans-acting transcriptional regulator of RuBisCO genes (rbcL and rbcS) expression. The polypeptide is Probable RuBisCO transcriptional regulator (rbcR) (Cyanidium caldarium (Red alga)).